Consider the following 319-residue polypeptide: MLSLQTLAKKAVAKQSVPEEYHYILKYCGLWWQNKPISLCHYCNYVILSSTPFKGELLHLDVALIMAIKENNYDVIRLFTEWGANIYYGLTCARTEQTQELCRKLGAKDGLNNKEIFAGLMRHKTSNNIILCHEIFDKNPMLEALNVQEMGEEIHRELKLFIFYILDNVPMNIFVKYWYAIAVKYKLKRAIFFFYQTYGHLSMWRLMCAIYFNNVFDLHEIYEQKIVHMDIDKMMQLACMQDYNFLTIYYCFVLGADIDQAITVTQWHYHTNNLYFCKDLKDLKQNTLTARPLLLPNITDPKKIYTMLKNYLPTSSNSL.

It belongs to the asfivirus MGF 360 family.

Its function is as follows. Plays a role in virus cell tropism, and may be required for efficient virus replication in macrophages. This Ornithodoros (relapsing fever ticks) protein is Protein MGF 360-8L.